A 360-amino-acid chain; its full sequence is Peptide chain release factor 1 (360 aa).

Gln237 is subject to N5-methylglutamine.

This sequence belongs to the prokaryotic/mitochondrial release factor family. In terms of processing, methylated by PrmC. Methylation increases the termination efficiency of RF1.

It localises to the cytoplasm. Peptide chain release factor 1 directs the termination of translation in response to the peptide chain termination codons UAG and UAA. This is Peptide chain release factor 1 from Cellvibrio japonicus (strain Ueda107) (Pseudomonas fluorescens subsp. cellulosa).